Here is a 122-residue protein sequence, read N- to C-terminus: Large ribosomal subunit protein uL14 (122 aa).

It belongs to the universal ribosomal protein uL14 family. In terms of assembly, part of the 50S ribosomal subunit. Forms a cluster with proteins L3 and L19. In the 70S ribosome, L14 and L19 interact and together make contacts with the 16S rRNA in bridges B5 and B8.

Binds to 23S rRNA. Forms part of two intersubunit bridges in the 70S ribosome. This Thermodesulfovibrio yellowstonii (strain ATCC 51303 / DSM 11347 / YP87) protein is Large ribosomal subunit protein uL14.